Here is a 946-residue protein sequence, read N- to C-terminus: Villin-4 (946 aa).

4 Gelsolin-like repeats span residues 28–109 (NFKP…ETEK), 152–219 (VHVK…EDGK), 274–339 (LEHE…TIMF), and 641–715 (EIHH…PQFF). Disordered regions lie at residues 744–783 (ATPSLDKPKRRTPAFSGRNAGQDKSQQRTRSMSHSPERHR) and 846–902 (TKST…PAPD). The segment covering 765–777 (QDKSQQRTRSMSH) has biased composition (polar residues). Positions 874-883 (SENEPEDDEN) are enriched in acidic residues. Residues 881-946 (DENSTIYPYE…NRLKSDLQLF (66 aa)) enclose the HP domain.

It belongs to the villin/gelsolin family.

The protein localises to the cytoplasm. The protein resides in the cytoskeleton. Functionally, ca(2+)-regulated actin-binding protein. Binds actin microfilaments (MFs). Involved in actin filament bundling, severing and capping. Caps the barbed end of actin filaments and is able to sever them in a calcium-dependent manner. The chain is Villin-4 from Oryza sativa subsp. indica (Rice).